Consider the following 226-residue polypeptide: PKHD-type hydroxylase BP3529 (226 aa).

One can recognise a Fe2OG dioxygenase domain in the interval Lys-78–Ser-178. Fe cation-binding residues include His-96, Asp-98, and His-159. Arg-169 lines the 2-oxoglutarate pocket.

Fe(2+) serves as cofactor. Requires L-ascorbate as cofactor.

This is PKHD-type hydroxylase BP3529 from Bordetella pertussis (strain Tohama I / ATCC BAA-589 / NCTC 13251).